The primary structure comprises 122 residues: Large ribosomal subunit protein bL12 (122 aa).

This sequence belongs to the bacterial ribosomal protein bL12 family. In terms of assembly, homodimer. Part of the ribosomal stalk of the 50S ribosomal subunit. Forms a multimeric L10(L12)X complex, where L10 forms an elongated spine to which 2 to 4 L12 dimers bind in a sequential fashion. Binds GTP-bound translation factors.

Its function is as follows. Forms part of the ribosomal stalk which helps the ribosome interact with GTP-bound translation factors. Is thus essential for accurate translation. The protein is Large ribosomal subunit protein bL12 of Shewanella loihica (strain ATCC BAA-1088 / PV-4).